A 578-amino-acid polypeptide reads, in one-letter code: CTP synthase (578 aa).

The 255-residue stretch at 305–559 (KIALVGKYTN…LGLVAASSGI (255 aa)) folds into the Glutamine amidotransferase type-1 domain. Catalysis depends on for GATase activity residues Cys404, His535, and Glu537.

This sequence belongs to the CTP synthase family.

It catalyses the reaction UTP + L-glutamine + ATP + H2O = CTP + L-glutamate + ADP + phosphate + 2 H(+). It participates in pyrimidine metabolism; CTP biosynthesis via de novo pathway; CTP from UDP: step 2/2. Catalyzes the ATP-dependent amination of UTP to CTP with either L-glutamine or ammonia as the source of nitrogen. This is CTP synthase (URA7) from Candida glabrata (strain ATCC 2001 / BCRC 20586 / JCM 3761 / NBRC 0622 / NRRL Y-65 / CBS 138) (Yeast).